The primary structure comprises 77 residues: U8-lycotoxin-Ls1n (77 aa).

A signal peptide spans 1–20 (MKLMIFTGLVLFAIVSLIEA). Residues 21–26 (QAENEK) constitute a propeptide that is removed on maturation.

This sequence belongs to the neurotoxin 19 (CSTX) family. 08 (U8-Lctx) subfamily. Contains 4 disulfide bonds. In terms of tissue distribution, expressed by the venom gland.

It is found in the secreted. The polypeptide is U8-lycotoxin-Ls1n (Lycosa singoriensis (Wolf spider)).